The primary structure comprises 528 residues: DnaJ homolog 1, mitochondrial (528 aa).

The N-terminal 66 residues, 1–66, are a transit peptide targeting the mitochondrion; it reads MFSKYLQSRV…REFSRCAALK (66 aa). In terms of domain architecture, J spans 86–150; that stretch reads DPYKTLGVSK…KKKKAFDTYG (65 aa). The CR-type zinc finger occupies 227-308; it reads GAKKDLSYSV…CMGSGTVRER (82 aa). 4 CXXCXGXG motif repeats span residues 240 to 247, 257 to 264, 280 to 287, and 296 to 303; these read CSSCHGSG, CFACKGTG, CDSCGGTG, and CRSCMGSG. A disordered region spans residues 455–528; it reads NDSTARRTQS…QNPKKDESSS (74 aa). Positions 462–488 are enriched in low complexity; that stretch reads TQSSPSGTNSSTSTSSTSSKHSTGIST. Basic and acidic residues predominate over residues 513–528; sequence LHPDEDQNPKKDESSS.

Its subcellular location is the mitochondrion. In Schizosaccharomyces pombe (strain 972 / ATCC 24843) (Fission yeast), this protein is DnaJ homolog 1, mitochondrial (mdj1).